Reading from the N-terminus, the 276-residue chain is Formamidopyrimidine-DNA glycosylase (276 aa).

Residue proline 2 is the Schiff-base intermediate with DNA of the active site. Residue glutamate 3 is the Proton donor of the active site. Lysine 58 serves as the catalytic Proton donor; for beta-elimination activity. Residues histidine 94, arginine 112, and arginine 157 each coordinate DNA. The segment at 242–276 adopts an FPG-type zinc-finger fold; the sequence is FVYDRAGLPCRVCGTPIKQIVQGQRSTYFCPTCQR. Arginine 266 serves as the catalytic Proton donor; for delta-elimination activity.

Belongs to the FPG family. Monomer. It depends on Zn(2+) as a cofactor.

The enzyme catalyses Hydrolysis of DNA containing ring-opened 7-methylguanine residues, releasing 2,6-diamino-4-hydroxy-5-(N-methyl)formamidopyrimidine.. It carries out the reaction 2'-deoxyribonucleotide-(2'-deoxyribose 5'-phosphate)-2'-deoxyribonucleotide-DNA = a 3'-end 2'-deoxyribonucleotide-(2,3-dehydro-2,3-deoxyribose 5'-phosphate)-DNA + a 5'-end 5'-phospho-2'-deoxyribonucleoside-DNA + H(+). Its function is as follows. Involved in base excision repair of DNA damaged by oxidation or by mutagenic agents. Acts as a DNA glycosylase that recognizes and removes damaged bases. Has a preference for oxidized purines, such as 7,8-dihydro-8-oxoguanine (8-oxoG). Has AP (apurinic/apyrimidinic) lyase activity and introduces nicks in the DNA strand. Cleaves the DNA backbone by beta-delta elimination to generate a single-strand break at the site of the removed base with both 3'- and 5'-phosphates. In Paraburkholderia phytofirmans (strain DSM 17436 / LMG 22146 / PsJN) (Burkholderia phytofirmans), this protein is Formamidopyrimidine-DNA glycosylase.